A 148-amino-acid chain; its full sequence is Antigen GM6 (148 aa).

Positions 1 to 22 (KLKASDSRSFLDPMPEGVPLSE) are disordered. 2 consecutive repeat copies span residues 1 to 68 (KLKA…HELA) and 69 to 136 (KLKA…HELA). The stretch at 137-148 (KLKASDSRSFQS) is one 3; truncated repeat.

Its subcellular location is the cytoplasm. It localises to the cytoskeleton. The sequence is that of Antigen GM6 (GM6) from Trypanosoma brucei gambiense.